Reading from the N-terminus, the 171-residue chain is Ribosome maturation factor RimM (171 aa).

Residues 97 to 169 (DGEFYYHEII…RVDVDIMEGL (73 aa)) enclose the PRC barrel domain.

This sequence belongs to the RimM family. As to quaternary structure, binds ribosomal protein uS19.

It localises to the cytoplasm. Its function is as follows. An accessory protein needed during the final step in the assembly of 30S ribosomal subunit, possibly for assembly of the head region. Essential for efficient processing of 16S rRNA. May be needed both before and after RbfA during the maturation of 16S rRNA. It has affinity for free ribosomal 30S subunits but not for 70S ribosomes. The polypeptide is Ribosome maturation factor RimM (Lactococcus lactis subsp. cremoris (strain SK11)).